A 96-amino-acid polypeptide reads, in one-letter code: Co-chaperonin GroES (96 aa).

The protein belongs to the GroES chaperonin family. As to quaternary structure, heptamer of 7 subunits arranged in a ring. Interacts with the chaperonin GroEL.

Its subcellular location is the cytoplasm. In terms of biological role, together with the chaperonin GroEL, plays an essential role in assisting protein folding. The GroEL-GroES system forms a nano-cage that allows encapsulation of the non-native substrate proteins and provides a physical environment optimized to promote and accelerate protein folding. GroES binds to the apical surface of the GroEL ring, thereby capping the opening of the GroEL channel. This chain is Co-chaperonin GroES, found in Acinetobacter baumannii (strain AB307-0294).